A 296-amino-acid chain; its full sequence is tRNA dimethylallyltransferase (296 aa).

An ATP-binding site is contributed by 11 to 18 (GPTAVGKT). Substrate is bound at residue 13 to 18 (TAVGKT). The segment at 36 to 39 (DSQQ) is interaction with substrate tRNA.

It belongs to the IPP transferase family. Monomer. Mg(2+) serves as cofactor.

It catalyses the reaction adenosine(37) in tRNA + dimethylallyl diphosphate = N(6)-dimethylallyladenosine(37) in tRNA + diphosphate. Catalyzes the transfer of a dimethylallyl group onto the adenine at position 37 in tRNAs that read codons beginning with uridine, leading to the formation of N6-(dimethylallyl)adenosine (i(6)A). The polypeptide is tRNA dimethylallyltransferase (Streptococcus agalactiae serotype III (strain NEM316)).